The chain runs to 379 residues: Cytochrome b (379 aa).

Helical transmembrane passes span 33-53 (FGSLLGLCLISQILTGLFLAM), 77-98 (WLIRNLHANGASFFFICLYLHI), 113-133 (WNIGVVLFLLVMMTAFVGYVL), and 178-198 (FFAFHFLFPFVVAGATMLHLL). His-83 and His-97 together coordinate heme b. Heme b is bound by residues His-182 and His-196. Residue His-201 coordinates a ubiquinone. Transmembrane regions (helical) follow at residues 226–246 (YKDLLGFIIMLTALTMLALFY), 288–308 (LGGVLALLSSILVLMVVPILH), 320–340 (ASQLLFWILVADMLVLTWIGG), and 347–367 (YIIIGQVASVLYFSLFLVLNP).

This sequence belongs to the cytochrome b family. The cytochrome bc1 complex contains 3 respiratory subunits (MT-CYB, CYC1 and UQCRFS1), 2 core proteins (UQCRC1 and UQCRC2) and probably 6 low-molecular weight proteins. The cofactor is heme b.

The protein resides in the mitochondrion inner membrane. Its function is as follows. Component of the ubiquinol-cytochrome c reductase complex (complex III or cytochrome b-c1 complex) that is part of the mitochondrial respiratory chain. The b-c1 complex mediates electron transfer from ubiquinol to cytochrome c. Contributes to the generation of a proton gradient across the mitochondrial membrane that is then used for ATP synthesis. The sequence is that of Cytochrome b (mt-cyb) from Anguilla anguilla (European freshwater eel).